The primary structure comprises 222 residues: UPF0502 protein XCC4136 (222 aa).

The protein belongs to the UPF0502 family.

In Xanthomonas campestris pv. campestris (strain ATCC 33913 / DSM 3586 / NCPPB 528 / LMG 568 / P 25), this protein is UPF0502 protein XCC4136.